The following is a 47-amino-acid chain: PhoP/PhoQ regulator MgrB (47 aa).

A helical membrane pass occupies residues 6 to 26 (WVVLGIVVVVCLLLWAQVFNI).

This sequence belongs to the MgrB family. In terms of assembly, may form homooligomers. Probably interacts with the periplasmic domain of PhoQ.

Its subcellular location is the cell inner membrane. Functionally, phoP-regulated transcription is redox-sensitive, being activated when the periplasm becomes more reducing. MgrB acts between DsbA/DsbB and PhoP/PhoQ in this pathway. Represses PhoP/PhoQ signaling, possibly by binding to the periplasmic domain of PhoQ, altering its activity and that of downstream effector PhoP. The polypeptide is PhoP/PhoQ regulator MgrB (Salmonella agona (strain SL483)).